The sequence spans 207 residues: Vexin (207 aa).

The interval 56–100 (ELLPHRGDRRDPGDRRRFGRLQTARPPTAHPAKASARPVGISEPK) is disordered. Basic and acidic residues predominate over residues 58-71 (LPHRGDRRDPGDRR).

It belongs to the vexin family.

It is found in the cell membrane. The protein localises to the nucleus. Its function is as follows. Required for neurogenesis in the neural plate and retina. Strongly cooperates with neural bHLH factors to promote neurogenesis. This is Vexin from Homo sapiens (Human).